The primary structure comprises 347 residues: GMP reductase (347 aa).

108-131 (ADFEKTVQILALNPALNFVCIDVA) is a binding site for NADP(+). The K(+) site is built by Gly-181 and Gly-183. The active-site Thioimidate intermediate is Cys-186. Position 216-239 (216-239 (IVSDGGCTMPGDVAKAFGGGADFV)) interacts with NADP(+).

Belongs to the IMPDH/GMPR family. GuaC type 1 subfamily. In terms of assembly, homotetramer.

It catalyses the reaction IMP + NH4(+) + NADP(+) = GMP + NADPH + 2 H(+). Catalyzes the irreversible NADPH-dependent deamination of GMP to IMP. It functions in the conversion of nucleobase, nucleoside and nucleotide derivatives of G to A nucleotides, and in maintaining the intracellular balance of A and G nucleotides. This Salmonella choleraesuis (strain SC-B67) protein is GMP reductase.